Consider the following 1112-residue polypeptide: Rho GTPase-activating protein 7 (1112 aa).

An SAM domain is found at 37-104; the sequence is LAEIEAKEAC…LNKCAVMKLE (68 aa). Phosphoserine is present on residues Ser112, Ser115, and Ser155. Disordered regions lie at residues 146–203, 318–350, 405–459, and 512–574; these read SPKQ…APAR, RSIS…RTRS, PKAL…VSSR, and SDEG…GVGA. Residues 183–193 are compositionally biased toward polar residues; that stretch reads VHSTGSLTTHA. The tract at residues 296–468 is focal adhesion-targeting (FAT); it reads QLNCVEISAL…RLSIYDNVPG (173 aa). 2 stretches are compositionally biased toward low complexity: residues 320 to 348 and 409 to 423; these read ISSS…VTRT and SNGS…SSVN. The residue at position 343 (Ser343) is a Phosphoserine. A compositionally biased stretch (basic and acidic residues) spans 437 to 446; it reads LRRENSSPKE. Residues 520-532 are compositionally biased toward polar residues; sequence ALDSVSPCPSSPK. Over residues 534 to 544 the composition is skewed to basic and acidic residues; it reads IHLDVDNDRAT. The span at 547-556 shows a compositional bias: polar residues; the sequence is DLDSTGNSLN. Residues 635-657 are polybasic cluster (PBR); that stretch reads KHGFSWAVPKFMKRIKVPDYKDR. One can recognise a Rho-GAP domain in the interval 662 to 868; sequence VPLTVNVQRT…HMIAECKKLF (207 aa). Residues 898–1105 enclose the START domain; that stretch reads CNDDSADYQH…RDSFSHQNTE (208 aa).

As to quaternary structure, interacts with EF1A1, facilitates EF1A1 distribution to the membrane periphery and ruffles upon growth factor stimulation and suppresses cell migration. Interacts with tensin TNS1 (via N-terminus); the interaction is decreased by phosphorylation of TNS1. Interacts with TNS3 and PTEN; in resting cells, interacts with TNS3 (via C2 tensin-type domain) but, following growth factor stimulation, TNS3 and PTEN are phosphorylated which leads to weakened interaction with TNS3 and enhanced interaction with PTEN. Interacts (via C-terminus) with tensin TNS4 (via SH2 domain); the interaction is independent of tyrosine phosphorylation of DLC1.

It localises to the cytoplasm. The protein resides in the cell junction. It is found in the focal adhesion. The protein localises to the membrane. Its function is as follows. Functions as a GTPase-activating protein for the small GTPases RHOA, RHOB, RHOC and CDC42, terminating their downstream signaling. This induces morphological changes and detachment through cytoskeletal reorganization, playing a critical role in biological processes such as cell migration and proliferation. Also functions in vivo as an activator of the phospholipase PLCD1. Active DLC1 increases cell migration velocity but reduces directionality. Required for growth factor-induced epithelial cell migration; in resting cells, interacts with TNS3 while PTEN interacts with the p85 regulatory subunit of the PI3K kinase complex but growth factor stimulation induces phosphorylation of TNS3 and PTEN, causing them to change their binding preference so that PTEN interacts with DLC1 and TNS3 interacts with p85. The PTEN-DLC1 complex translocates to the posterior of migrating cells to activate RHOA while the TNS3-p85 complex translocates to the leading edge of migrating cells to promote RAC1 activation. The chain is Rho GTPase-activating protein 7 (DLC1) from Bos taurus (Bovine).